The chain runs to 135 residues: MRNTFIVCWQYLRAFALIYLCLLAGNAVSALLPFTIPGSIIGMLVLFTLLASQILPAQWVKPGCYLLIRHMALLFVPIGVGVMNYYDLVNQQFGPIVVSCLISTFIVMLVVGFSTQIMQRERATAGDRTPPKDNE.

A run of 4 helical transmembrane segments spans residues 5 to 25 (FIVC…LLAG), 30 to 50 (ALLP…FTLL), 63 to 83 (GCYL…VGVM), and 93 to 113 (FGPI…VVGF).

It belongs to the UPF0299 family.

The protein localises to the cell inner membrane. This is UPF0299 membrane protein ECA2828 from Pectobacterium atrosepticum (strain SCRI 1043 / ATCC BAA-672) (Erwinia carotovora subsp. atroseptica).